The following is a 179-amino-acid chain: Photosystem I assembly protein Ycf4 (179 aa).

The next 2 membrane-spanning stretches (helical) occupy residues 21 to 41 (LISFSGGIGFLLAGLSSYLGV) and 59 to 79 (IVMTFYGTIGILLSLFLLLNI).

Belongs to the Ycf4 family.

Its subcellular location is the plastid. The protein localises to the chloroplast thylakoid membrane. Functionally, seems to be required for the assembly of the photosystem I complex. This Rhodomonas salina (Cryptomonas salina) protein is Photosystem I assembly protein Ycf4.